A 706-amino-acid chain; its full sequence is DNA ligase (706 aa).

Residues 40–44 (DLQYD), 89–90 (SI), and glutamate 120 contribute to the NAD(+) site. Lysine 122 (N6-AMP-lysine intermediate) is an active-site residue. Positions 143, 190, 306, and 330 each coordinate NAD(+). Zn(2+)-binding residues include cysteine 424, cysteine 427, cysteine 442, and cysteine 447. In terms of domain architecture, BRCT spans 625-706 (EANLPLAGKN…FRLRYETEAT (82 aa)).

It belongs to the NAD-dependent DNA ligase family. LigA subfamily. Mg(2+) is required as a cofactor. Mn(2+) serves as cofactor.

The enzyme catalyses NAD(+) + (deoxyribonucleotide)n-3'-hydroxyl + 5'-phospho-(deoxyribonucleotide)m = (deoxyribonucleotide)n+m + AMP + beta-nicotinamide D-nucleotide.. Functionally, DNA ligase that catalyzes the formation of phosphodiester linkages between 5'-phosphoryl and 3'-hydroxyl groups in double-stranded DNA using NAD as a coenzyme and as the energy source for the reaction. It is essential for DNA replication and repair of damaged DNA. The chain is DNA ligase from Rhodopirellula baltica (strain DSM 10527 / NCIMB 13988 / SH1).